The chain runs to 161 residues: 3-isopropylmalate dehydratase small subunit (161 aa).

This sequence belongs to the LeuD family. LeuD type 2 subfamily. As to quaternary structure, heterodimer of LeuC and LeuD.

It carries out the reaction (2R,3S)-3-isopropylmalate = (2S)-2-isopropylmalate. It functions in the pathway amino-acid biosynthesis; L-leucine biosynthesis; L-leucine from 3-methyl-2-oxobutanoate: step 2/4. Catalyzes the isomerization between 2-isopropylmalate and 3-isopropylmalate, via the formation of 2-isopropylmaleate. This Pyrobaculum islandicum (strain DSM 4184 / JCM 9189 / GEO3) protein is 3-isopropylmalate dehydratase small subunit.